A 602-amino-acid chain; its full sequence is Proline--tRNA ligase (602 aa).

This sequence belongs to the class-II aminoacyl-tRNA synthetase family. ProS type 1 subfamily. As to quaternary structure, homodimer.

It is found in the cytoplasm. It catalyses the reaction tRNA(Pro) + L-proline + ATP = L-prolyl-tRNA(Pro) + AMP + diphosphate. Functionally, catalyzes the attachment of proline to tRNA(Pro) in a two-step reaction: proline is first activated by ATP to form Pro-AMP and then transferred to the acceptor end of tRNA(Pro). As ProRS can inadvertently accommodate and process non-cognate amino acids such as alanine and cysteine, to avoid such errors it has two additional distinct editing activities against alanine. One activity is designated as 'pretransfer' editing and involves the tRNA(Pro)-independent hydrolysis of activated Ala-AMP. The other activity is designated 'posttransfer' editing and involves deacylation of mischarged Ala-tRNA(Pro). The misacylated Cys-tRNA(Pro) is not edited by ProRS. This is Proline--tRNA ligase from Thermosynechococcus vestitus (strain NIES-2133 / IAM M-273 / BP-1).